The sequence spans 842 residues: Gamma-aminobutyric acid type B receptor subunit 2 (842 aa).

Positions Met-1–Gly-17 are cleaved as a signal peptide. Residues Tyr-18–Ser-438 are Extracellular-facing. N-linked (GlcNAc...) asparagine glycosylation is found at Asn-274, Asn-279, Asn-327, and Asn-366. The helical transmembrane segment at Ile-439–Leu-459 threads the bilayer. The Cytoplasmic portion of the chain corresponds to Leu-460 to Asn-477. Residues Leu-478–Leu-498 form a helical membrane-spanning segment. Residues Asp-499–Asp-506 lie on the Extracellular side of the membrane. Residues Val-507–Phe-527 traverse the membrane as a helical segment. Topologically, residues Gly-528–Leu-556 are cytoplasmic. The helical transmembrane segment at Phe-557–Val-577 threads the bilayer. Topologically, residues Ser-578–Gly-610 are extracellular. Asn-605 is a glycosylation site (N-linked (GlcNAc...) asparagine). The helical transmembrane segment at Val-611 to Ala-631 threads the bilayer. Residues Trp-632–Tyr-647 are Cytoplasmic-facing. A helical transmembrane segment spans residues Ile-648–Ile-668. Over Leu-669 to Met-676 the chain is Extracellular. A helical membrane pass occupies residues Phe-677–Val-697. The Cytoplasmic portion of the chain corresponds to Pro-698 to Leu-842. Over residues Ala-725–Ser-740 the composition is skewed to polar residues. Disordered regions lie at residues Ala-725 to Ile-744 and Ser-791 to Leu-842.

The protein belongs to the G-protein coupled receptor 3 family. As to quaternary structure, may form a heterodimer with gbb-1. As to expression, expressed in cholinergic motor neurons.

Its subcellular location is the cell membrane. Component of a heterodimeric G-protein coupled receptor for GABA, formed by gbb-1 and gbb-2. Within the heterodimeric GABA receptor, only gbb-1 seems to bind agonists, while gbb-2 mediates coupling to G proteins. Ligand binding causes a conformation change that triggers signaling via guanine nucleotide-binding proteins (G proteins) and modulates the activity of down-stream effectors, such as adenylate cyclase. Signaling inhibits adenylate cyclase, stimulates phospholipase A2, activates potassium channels, inactivates voltage-dependent calcium-channels and modulates inositol phospholipid hydrolysis. Plays a critical role in the fine-tuning of inhibitory synaptic transmission. Pre-synaptic GABA receptor inhibits neurotransmitter release by down-regulating high-voltage activated calcium channels, whereas postsynaptic GABA receptor decreases neuronal excitability by activating a prominent inwardly rectifying potassium (Kir) conductance that underlies the late inhibitory postsynaptic potentials. Along with gbb-1, may couple to the G(o)-alpha G-protein goa-1 to negatively regulate cholinergic receptor activity in the presence of high levels of acetylcholine in ventral cord motor neurons. As acetylcholine depolarizes body wall muscles, modulation of acetylcholine levels most likely results in the control of locomotory behavior. Regulates locomotory behavior in response to GABA release by GABAergic motor neurons. The protein is Gamma-aminobutyric acid type B receptor subunit 2 of Caenorhabditis elegans.